The chain runs to 475 residues: Ribulose bisphosphate carboxylase large chain (475 aa).

A propeptide spanning residues 1–2 (MS) is cleaved from the precursor. N-acetylproline is present on P3. K14 carries the N6,N6,N6-trimethyllysine modification. Substrate-binding residues include N123 and T173. The active-site Proton acceptor is K175. K177 contacts substrate. Mg(2+) contacts are provided by K201, D203, and E204. K201 carries the post-translational modification N6-carboxylysine. Catalysis depends on H294, which acts as the Proton acceptor. Substrate is bound by residues R295, H327, and S379.

Belongs to the RuBisCO large chain family. Type I subfamily. As to quaternary structure, heterohexadecamer of 8 large chains and 8 small chains; disulfide-linked. The disulfide link is formed within the large subunit homodimers. Requires Mg(2+) as cofactor. The disulfide bond which can form in the large chain dimeric partners within the hexadecamer appears to be associated with oxidative stress and protein turnover.

The protein resides in the plastid. Its subcellular location is the chloroplast. The enzyme catalyses 2 (2R)-3-phosphoglycerate + 2 H(+) = D-ribulose 1,5-bisphosphate + CO2 + H2O. The catalysed reaction is D-ribulose 1,5-bisphosphate + O2 = 2-phosphoglycolate + (2R)-3-phosphoglycerate + 2 H(+). RuBisCO catalyzes two reactions: the carboxylation of D-ribulose 1,5-bisphosphate, the primary event in carbon dioxide fixation, as well as the oxidative fragmentation of the pentose substrate in the photorespiration process. Both reactions occur simultaneously and in competition at the same active site. This is Ribulose bisphosphate carboxylase large chain from Corylus cornuta (Beaked hazel).